Reading from the N-terminus, the 408-residue chain is 8-amino-7-oxononanoate synthase (408 aa).

R20 contributes to the substrate binding site. G119–Y120 is a binding site for pyridoxal 5'-phosphate. H144 is a binding site for substrate. Residues S190, H218, and T246 each coordinate pyridoxal 5'-phosphate. N6-(pyridoxal phosphate)lysine is present on K249. Substrate is bound at residue T372.

It belongs to the class-II pyridoxal-phosphate-dependent aminotransferase family. BioF subfamily. Homodimer. Requires pyridoxal 5'-phosphate as cofactor.

It carries out the reaction 6-carboxyhexanoyl-[ACP] + L-alanine + H(+) = (8S)-8-amino-7-oxononanoate + holo-[ACP] + CO2. The protein operates within cofactor biosynthesis; biotin biosynthesis. Catalyzes the decarboxylative condensation of pimeloyl-[acyl-carrier protein] and L-alanine to produce 8-amino-7-oxononanoate (AON), [acyl-carrier protein], and carbon dioxide. The chain is 8-amino-7-oxononanoate synthase from Leptothrix cholodnii (strain ATCC 51168 / LMG 8142 / SP-6) (Leptothrix discophora (strain SP-6)).